The following is a 365-amino-acid chain: Histidinol-phosphate aminotransferase (365 aa).

At Lys227 the chain carries N6-(pyridoxal phosphate)lysine.

This sequence belongs to the class-II pyridoxal-phosphate-dependent aminotransferase family. Histidinol-phosphate aminotransferase subfamily. As to quaternary structure, homodimer. It depends on pyridoxal 5'-phosphate as a cofactor.

The enzyme catalyses L-histidinol phosphate + 2-oxoglutarate = 3-(imidazol-4-yl)-2-oxopropyl phosphate + L-glutamate. It participates in amino-acid biosynthesis; L-histidine biosynthesis; L-histidine from 5-phospho-alpha-D-ribose 1-diphosphate: step 7/9. The sequence is that of Histidinol-phosphate aminotransferase from Campylobacter concisus (strain 13826).